Here is a 195-residue protein sequence, read N- to C-terminus: Interferon tau-6 (195 aa).

The first 23 residues, 1-23 (MAFVLSLLMALVLVSYGPGGSLG), serve as a signal peptide directing secretion. 2 disulfide bridges follow: C24–C122 and C52–C162. Residue N101 is glycosylated (N-linked (GlcNAc...) asparagine).

It belongs to the alpha/beta interferon family. IFN-alphaII subfamily. In terms of tissue distribution, constitutively and exclusively expressed in the mononuclear cells of the extraembryonic trophectoderm.

It localises to the secreted. Functionally, paracrine hormone primarily responsible for maternal recognition of pregnancy. Interacts with endometrial receptors, probably type I interferon receptors, and blocks estrogen receptor expression, preventing the estrogen-induced increase in oxytocin receptor expression in the endometrium. This results in the suppression of the pulsatile endometrial release of the luteolytic hormone prostaglandin F2-alpha, hindering the regression of the corpus luteum (luteolysis) and therefore a return to ovarian cyclicity. This, and a possible direct effect of IFN-tau on prostaglandin synthesis, leads in turn to continued ovarian progesterone secretion, which stimulates the secretion by the endometrium of the nutrients required for the growth of the conceptus. In summary, displays particularly high antiviral and antiproliferative potency concurrently with particular weak cytotoxicity, high antiluteolytic activity and immunomodulatory properties. In contrast with other IFNs, IFN-tau is not virally inducible. This is Interferon tau-6 (IFNT6) from Ovis aries (Sheep).